A 156-amino-acid polypeptide reads, in one-letter code: Small ribosomal subunit protein uS7 (156 aa).

The protein belongs to the universal ribosomal protein uS7 family. In terms of assembly, part of the 30S ribosomal subunit. Contacts proteins S9 and S11.

Its function is as follows. One of the primary rRNA binding proteins, it binds directly to 16S rRNA where it nucleates assembly of the head domain of the 30S subunit. Is located at the subunit interface close to the decoding center, probably blocks exit of the E-site tRNA. In Mycobacterium tuberculosis (strain CDC 1551 / Oshkosh), this protein is Small ribosomal subunit protein uS7.